We begin with the raw amino-acid sequence, 361 residues long: Probable dual-specificity RNA methyltransferase RlmN (361 aa).

Glutamate 104 acts as the Proton acceptor in catalysis. The region spanning 110–343 is the Radical SAM core domain; sequence HEYGNSVCVT…VTIRREQGHD (234 aa). A disulfide bridge connects residues cysteine 117 and cysteine 348. [4Fe-4S] cluster contacts are provided by cysteine 124, cysteine 128, and cysteine 131. S-adenosyl-L-methionine is bound by residues 174–175, serine 206, 229–231, and asparagine 305; these read GE and SLH. Residue cysteine 348 is the S-methylcysteine intermediate of the active site.

The protein belongs to the radical SAM superfamily. RlmN family. It depends on [4Fe-4S] cluster as a cofactor.

It localises to the cytoplasm. The catalysed reaction is adenosine(2503) in 23S rRNA + 2 reduced [2Fe-2S]-[ferredoxin] + 2 S-adenosyl-L-methionine = 2-methyladenosine(2503) in 23S rRNA + 5'-deoxyadenosine + L-methionine + 2 oxidized [2Fe-2S]-[ferredoxin] + S-adenosyl-L-homocysteine. It carries out the reaction adenosine(37) in tRNA + 2 reduced [2Fe-2S]-[ferredoxin] + 2 S-adenosyl-L-methionine = 2-methyladenosine(37) in tRNA + 5'-deoxyadenosine + L-methionine + 2 oxidized [2Fe-2S]-[ferredoxin] + S-adenosyl-L-homocysteine. Specifically methylates position 2 of adenine 2503 in 23S rRNA and position 2 of adenine 37 in tRNAs. In Bacillus licheniformis (strain ATCC 14580 / DSM 13 / JCM 2505 / CCUG 7422 / NBRC 12200 / NCIMB 9375 / NCTC 10341 / NRRL NRS-1264 / Gibson 46), this protein is Probable dual-specificity RNA methyltransferase RlmN.